A 348-amino-acid polypeptide reads, in one-letter code: A-kinase anchor protein 7 isoform gamma (348 aa).

The tract at residues 1-25 is disordered; that stretch reads MERPEAGGINSNECENVSRKKKMSE. AMP-binding positions include threonine 129 and 219–221; that span reads HLT. CMP-binding positions include threonine 129 and 219–221; that span reads HLT. The segment at 294–348 is PKA-RII-alpha subunit binding domain; sequence AELVRLSKRLVENAVLKAVQQYLEETQNKNKPGEGSSVKTEAADQNGNDNENNRK. The interval 295 to 319 is RI-alpha-binding; sequence ELVRLSKRLVENAVLKAVQQYLEET. Residues 296–309 form an RII-binding region; sequence LVRLSKRLVENAVL. The tract at residues 316–348 is disordered; sequence LEETQNKNKPGEGSSVKTEAADQNGNDNENNRK. The segment covering 330–348 has biased composition (polar residues); sequence SVKTEAADQNGNDNENNRK.

Binds cAMP-dependent protein kinase (PKA). Interacts with PRKCA; only the cytoplasmic form is capable of interacting with PRKCA. Expressed in brain, heart, lung, pancreas and placenta.

The protein resides in the nucleus. It localises to the cytoplasm. In terms of biological role, probably targets cAMP-dependent protein kinase (PKA) to the cellular membrane or cytoskeletal structures. The membrane-associated form reduces epithelial sodium channel (ENaC) activity, whereas the free cytoplasmic form may negatively regulate ENaC channel feedback inhibition by intracellular sodium. This is A-kinase anchor protein 7 isoform gamma (AKAP7) from Homo sapiens (Human).